The following is a 1353-amino-acid chain: DNA-directed RNA polymerase subunit beta' (1353 aa).

A unknown region spans residues 1–117; that stretch reads MSDNRLFTSV…AFQKLNDLFK (117 aa). A DNA-directed RNA polymerase subunit beta' region spans residues 118 to 1353; sequence LYNHFPSISS…SELTKKTNQN (1236 aa). Cys-189, Cys-191, Cys-203, and Cys-206 together coordinate Zn(2+). Residues Asp-578, Asp-580, and Asp-582 each contribute to the Mg(2+) site.

It belongs to the RNA polymerase beta' chain family. In terms of assembly, the RNAP catalytic core consists of 2 alpha, 1 beta, 1 beta' and 1 omega subunit. When a sigma factor is associated with the core the holoenzyme is formed, which can initiate transcription. The cofactor is Mg(2+). It depends on Zn(2+) as a cofactor.

The enzyme catalyses RNA(n) + a ribonucleoside 5'-triphosphate = RNA(n+1) + diphosphate. Functionally, DNA-dependent RNA polymerase catalyzes the transcription of DNA into RNA using the four ribonucleoside triphosphates as substrates. This is DNA-directed RNA polymerase subunit beta' from Aster yellows witches'-broom phytoplasma (strain AYWB).